Reading from the N-terminus, the 153-residue chain is 3-hydroxyacyl-[acyl-carrier-protein] dehydratase FabZ (153 aa).

Residue His57 is part of the active site.

This sequence belongs to the thioester dehydratase family. FabZ subfamily.

It is found in the cytoplasm. The catalysed reaction is a (3R)-hydroxyacyl-[ACP] = a (2E)-enoyl-[ACP] + H2O. Involved in unsaturated fatty acids biosynthesis. Catalyzes the dehydration of short chain beta-hydroxyacyl-ACPs and long chain saturated and unsaturated beta-hydroxyacyl-ACPs. This chain is 3-hydroxyacyl-[acyl-carrier-protein] dehydratase FabZ, found in Xanthomonas campestris pv. campestris (strain 8004).